Consider the following 211-residue polypeptide: Leucyl/phenylalanyl-tRNA--protein transferase (211 aa).

This sequence belongs to the L/F-transferase family.

Its subcellular location is the cytoplasm. It carries out the reaction N-terminal L-lysyl-[protein] + L-leucyl-tRNA(Leu) = N-terminal L-leucyl-L-lysyl-[protein] + tRNA(Leu) + H(+). It catalyses the reaction N-terminal L-arginyl-[protein] + L-leucyl-tRNA(Leu) = N-terminal L-leucyl-L-arginyl-[protein] + tRNA(Leu) + H(+). The catalysed reaction is L-phenylalanyl-tRNA(Phe) + an N-terminal L-alpha-aminoacyl-[protein] = an N-terminal L-phenylalanyl-L-alpha-aminoacyl-[protein] + tRNA(Phe). Functionally, functions in the N-end rule pathway of protein degradation where it conjugates Leu, Phe and, less efficiently, Met from aminoacyl-tRNAs to the N-termini of proteins containing an N-terminal arginine or lysine. The chain is Leucyl/phenylalanyl-tRNA--protein transferase from Flavobacterium psychrophilum (strain ATCC 49511 / DSM 21280 / CIP 103535 / JIP02/86).